The following is a 188-amino-acid chain: Elongation factor P (188 aa).

The residue at position 34 (lysine 34) is an N6-(3,6-diaminohexanoyl)-5-hydroxylysine.

The protein belongs to the elongation factor P family. In terms of processing, may be beta-lysylated on the epsilon-amino group of Lys-34 by the combined action of EpmA and EpmB, and then hydroxylated on the C5 position of the same residue by EpmC (if this protein is present). Lysylation is critical for the stimulatory effect of EF-P on peptide-bond formation. The lysylation moiety may extend toward the peptidyltransferase center and stabilize the terminal 3-CCA end of the tRNA. Hydroxylation of the C5 position on Lys-34 may allow additional potential stabilizing hydrogen-bond interactions with the P-tRNA.

It localises to the cytoplasm. It functions in the pathway protein biosynthesis; polypeptide chain elongation. Functionally, involved in peptide bond synthesis. Alleviates ribosome stalling that occurs when 3 or more consecutive Pro residues or the sequence PPG is present in a protein, possibly by augmenting the peptidyl transferase activity of the ribosome. Modification of Lys-34 is required for alleviation. This chain is Elongation factor P, found in Cronobacter sakazakii (strain ATCC BAA-894) (Enterobacter sakazakii).